We begin with the raw amino-acid sequence, 37 residues long: Large ribosomal subunit protein bL36 (37 aa).

It belongs to the bacterial ribosomal protein bL36 family.

This chain is Large ribosomal subunit protein bL36, found in Syntrophotalea carbinolica (strain DSM 2380 / NBRC 103641 / GraBd1) (Pelobacter carbinolicus).